A 278-amino-acid chain; its full sequence is Trehalose monomycolate transport factor A (278 aa).

Position 1 (methionine 1) is a topological domain, periplasmic. Residues 2–22 (VPLWFTLSALCFVGAAVLLYV) traverse the membrane as a helical segment. Residues 23 to 278 (DIDRRRGLGR…NGREASHFQR (256 aa)) are Cytoplasmic-facing. The interval 200 to 278 (PPVPQNGSQA…NGREASHFQR (79 aa)) is disordered. The segment covering 269–278 (NGREASHFQR) has biased composition (basic and acidic residues).

As to quaternary structure, monomer. Interacts (via N-terminus) with MmpL3; active trehalose monomycolate (TMM) biosynthesis is not required for the complex formation. Interacts with MSMEG_5308.

The protein localises to the cell inner membrane. Its subcellular location is the cell septum. It is found in the cell tip. In terms of biological role, required for MmpL3-dependent trehalose monomycolate (TMM) transport to the cell wall. Required for growth and cell elongation. The polypeptide is Trehalose monomycolate transport factor A (Mycolicibacterium smegmatis (strain ATCC 700084 / mc(2)155) (Mycobacterium smegmatis)).